The following is a 263-amino-acid chain: 5'-nucleotidase SurE (263 aa).

Residues aspartate 21, aspartate 22, serine 52, and asparagine 105 each contribute to the a divalent metal cation site.

It belongs to the SurE nucleotidase family. It depends on a divalent metal cation as a cofactor.

The protein localises to the cytoplasm. The enzyme catalyses a ribonucleoside 5'-phosphate + H2O = a ribonucleoside + phosphate. Functionally, nucleotidase that shows phosphatase activity on nucleoside 5'-monophosphates. The chain is 5'-nucleotidase SurE from Vibrio cholerae serotype O1 (strain ATCC 39541 / Classical Ogawa 395 / O395).